Consider the following 89-residue polypeptide: DNA-binding protein HU (89 aa).

Belongs to the bacterial histone-like protein family. Homodimer. The dimer interacts with the DNA mimic protein DMP12. It also interacts with the monomeric form of the DNA mimic protein DMP19 with 1:1 stoichiometry.

With respect to regulation, activity is regulated by the DNA mimic protein DMP12. Activity is inhibited in the presence of the DNA mimic protein DMP19, which interacts with HU and prevents the binding of HU to DNA. Histone-like DNA-binding protein which is capable of wrapping DNA to stabilize it, and thus to prevent its denaturation under extreme environmental conditions. The polypeptide is DNA-binding protein HU (Neisseria meningitidis serogroup B (strain ATCC BAA-335 / MC58)).